Here is a 261-residue protein sequence, read N- to C-terminus: Type III pantothenate kinase (261 aa).

6 to 13 (DAGNSNIT) contributes to the ATP binding site. Residues tyrosine 100 and 107-110 (GADR) each bind substrate. Residue aspartate 109 is the Proton acceptor of the active site. A K(+)-binding site is contributed by aspartate 129. ATP is bound at residue threonine 132. Threonine 184 provides a ligand contact to substrate.

This sequence belongs to the type III pantothenate kinase family. As to quaternary structure, homodimer. NH4(+) serves as cofactor. K(+) is required as a cofactor.

It is found in the cytoplasm. The catalysed reaction is (R)-pantothenate + ATP = (R)-4'-phosphopantothenate + ADP + H(+). Its pathway is cofactor biosynthesis; coenzyme A biosynthesis; CoA from (R)-pantothenate: step 1/5. In terms of biological role, catalyzes the phosphorylation of pantothenate (Pan), the first step in CoA biosynthesis. This chain is Type III pantothenate kinase, found in Solibacter usitatus (strain Ellin6076).